We begin with the raw amino-acid sequence, 175 residues long: Ribosome maturation factor RimM (175 aa).

In terms of domain architecture, PRC barrel spans 100–173 (EGEYYFHEII…IIIIRPMEGL (74 aa)).

This sequence belongs to the RimM family. As to quaternary structure, binds ribosomal protein uS19.

It localises to the cytoplasm. Functionally, an accessory protein needed during the final step in the assembly of 30S ribosomal subunit, possibly for assembly of the head region. Essential for efficient processing of 16S rRNA. May be needed both before and after RbfA during the maturation of 16S rRNA. It has affinity for free ribosomal 30S subunits but not for 70S ribosomes. The polypeptide is Ribosome maturation factor RimM (Geobacillus thermodenitrificans (strain NG80-2)).